A 455-amino-acid polypeptide reads, in one-letter code: Argininosuccinate lyase (455 aa).

The protein belongs to the lyase 1 family. Argininosuccinate lyase subfamily.

The protein localises to the cytoplasm. It carries out the reaction 2-(N(omega)-L-arginino)succinate = fumarate + L-arginine. It participates in amino-acid biosynthesis; L-arginine biosynthesis; L-arginine from L-ornithine and carbamoyl phosphate: step 3/3. In Shewanella sp. (strain MR-7), this protein is Argininosuccinate lyase.